The primary structure comprises 267 residues: 3-oxoadipate enol-lactonase 2 (267 aa).

It catalyses the reaction (4,5-dihydro-5-oxofuran-2-yl)-acetate + H2O = 3-oxoadipate + H(+). It participates in aromatic compound metabolism; beta-ketoadipate pathway; 3-oxoadipate from 5-oxo-4,5-dihydro-2-furylacetate: step 1/1. The protein is 3-oxoadipate enol-lactonase 2 (catD) of Acinetobacter baylyi (strain ATCC 33305 / BD413 / ADP1).